The following is a 413-amino-acid chain: Glycosyl hydrolase family 109 protein 2 (413 aa).

NAD(+) contacts are provided by residues 26-27 (NR), Asp48, 96-99 (WLTH), 116-117 (EV), and Asn145. Tyr174 is a binding site for substrate. NAD(+)-binding positions include 191–195 (YHNHW) and Tyr208. Substrate-binding positions include 208-211 (YPTH) and Tyr290.

Belongs to the Gfo/Idh/MocA family. Glycosyl hydrolase 109 subfamily. NAD(+) is required as a cofactor.

Its function is as follows. Glycosidase. In Phocaeicola vulgatus (strain ATCC 8482 / DSM 1447 / JCM 5826 / CCUG 4940 / NBRC 14291 / NCTC 11154) (Bacteroides vulgatus), this protein is Glycosyl hydrolase family 109 protein 2.